Reading from the N-terminus, the 306-residue chain is Large ribosomal subunit protein uL2m (306 aa).

The N-terminal 60 residues, 1-60 (MALRVVTRALGSLSLTPRIAAVPGPSLLPAAQVTNNVLLQLPSASMLLPSRPLLTSVALS), are a transit peptide targeting the mitochondrion.

This sequence belongs to the universal ribosomal protein uL2 family. In terms of assembly, component of the mitochondrial ribosome large subunit (39S) which comprises a 16S rRNA and about 50 distinct proteins.

It localises to the mitochondrion. This Bos taurus (Bovine) protein is Large ribosomal subunit protein uL2m (MRPL2).